A 203-amino-acid polypeptide reads, in one-letter code: Recombination protein RecR (203 aa).

A C4-type zinc finger spans residues 57–72 (CARCNTFSETELCVLC). The 96-residue stretch at 80 to 175 (DVLCVVEMPA…SVSRIARGLP (96 aa)) folds into the Toprim domain.

Belongs to the RecR family.

In terms of biological role, may play a role in DNA repair. It seems to be involved in an RecBC-independent recombinational process of DNA repair. It may act with RecF and RecO. The chain is Recombination protein RecR from Laribacter hongkongensis (strain HLHK9).